We begin with the raw amino-acid sequence, 321 residues long: Acyl-CoA 5-desaturase AL21 (321 aa).

2 helical membrane-spanning segments follow: residues I42 to F62 and W64 to L84. Fe cation is bound by residues H87, H92, H124, H127, and H128. The Histidine box-1 motif lies at H87 to H92. The Histidine box-2 motif lies at H124–H128. A helical transmembrane segment spans residues L190–V210. Fe cation-binding residues include H227, H256, H259, and H260. The short motif at H256–H260 is the Histidine box-3 element.

The protein belongs to the fatty acid desaturase type 1 family. It depends on Fe(2+) as a cofactor.

It localises to the membrane. It catalyses the reaction (11Z,14Z)-eicosadienoyl-CoA + AH2 + O2 = (5Z,11Z,14Z)-eicosatrienoyl-CoA + A + 2 H2O. The catalysed reaction is (11Z,14Z,17Z)-eicosatrienoyl-CoA + AH2 + O2 = (5Z,11Z,14Z,17Z)-eicosatetraenoyl-CoA + A + 2 H2O. The protein operates within lipid metabolism; polyunsaturated fatty acid biosynthesis. Functionally, catalyzes the desaturation of 20:2Delta(11,14) and 20:3Delta(11,14,17) to generate sciadonic acid (20:3Delta(5,11,14)) and juniperonic acid (20:4Delta(5,11,14,17)). The enzyme can also use 16:0 and 18:0 as substrates. This chain is Acyl-CoA 5-desaturase AL21, found in Anemone leveillei (Windflower).